Consider the following 302-residue polypeptide: Bifunctional protein FolD (302 aa).

Residues 168–170, Thr197, and Val238 contribute to the NADP(+) site; that span reads GRS.

This sequence belongs to the tetrahydrofolate dehydrogenase/cyclohydrolase family. Homodimer.

It carries out the reaction (6R)-5,10-methylene-5,6,7,8-tetrahydrofolate + NADP(+) = (6R)-5,10-methenyltetrahydrofolate + NADPH. The catalysed reaction is (6R)-5,10-methenyltetrahydrofolate + H2O = (6R)-10-formyltetrahydrofolate + H(+). Its pathway is one-carbon metabolism; tetrahydrofolate interconversion. In terms of biological role, catalyzes the oxidation of 5,10-methylenetetrahydrofolate to 5,10-methenyltetrahydrofolate and then the hydrolysis of 5,10-methenyltetrahydrofolate to 10-formyltetrahydrofolate. This chain is Bifunctional protein FolD, found in Desulfatibacillum aliphaticivorans.